Here is a 364-residue protein sequence, read N- to C-terminus: Histidinol-phosphate aminotransferase (364 aa).

Lys-226 carries the N6-(pyridoxal phosphate)lysine modification.

Belongs to the class-II pyridoxal-phosphate-dependent aminotransferase family. Histidinol-phosphate aminotransferase subfamily. As to quaternary structure, homodimer. Pyridoxal 5'-phosphate is required as a cofactor.

It carries out the reaction L-histidinol phosphate + 2-oxoglutarate = 3-(imidazol-4-yl)-2-oxopropyl phosphate + L-glutamate. Its pathway is amino-acid biosynthesis; L-histidine biosynthesis; L-histidine from 5-phospho-alpha-D-ribose 1-diphosphate: step 7/9. In Campylobacter jejuni subsp. doylei (strain ATCC BAA-1458 / RM4099 / 269.97), this protein is Histidinol-phosphate aminotransferase.